Reading from the N-terminus, the 479-residue chain is Ribosomal RNA small subunit methyltransferase F (479 aa).

Residues 125–131 (AAAPGSK), Glu149, Asp176, and Asp194 contribute to the S-adenosyl-L-methionine site. Cys247 serves as the catalytic Nucleophile.

The protein belongs to the class I-like SAM-binding methyltransferase superfamily. RsmB/NOP family.

The protein localises to the cytoplasm. The enzyme catalyses cytidine(1407) in 16S rRNA + S-adenosyl-L-methionine = 5-methylcytidine(1407) in 16S rRNA + S-adenosyl-L-homocysteine + H(+). Specifically methylates the cytosine at position 1407 (m5C1407) of 16S rRNA. This is Ribosomal RNA small subunit methyltransferase F from Salmonella agona (strain SL483).